The sequence spans 700 residues: Elongation factor G 2 (700 aa).

Residues 8-290 enclose the tr-type G domain; it reads ERYRNIGISA…AVIDFLPSPV (283 aa). GTP contacts are provided by residues 17–24, 88–92, and 142–145; these read AHIDAGKT, DTPGH, and NKMD.

This sequence belongs to the TRAFAC class translation factor GTPase superfamily. Classic translation factor GTPase family. EF-G/EF-2 subfamily.

Its subcellular location is the cytoplasm. Catalyzes the GTP-dependent ribosomal translocation step during translation elongation. During this step, the ribosome changes from the pre-translocational (PRE) to the post-translocational (POST) state as the newly formed A-site-bound peptidyl-tRNA and P-site-bound deacylated tRNA move to the P and E sites, respectively. Catalyzes the coordinated movement of the two tRNA molecules, the mRNA and conformational changes in the ribosome. The chain is Elongation factor G 2 from Burkholderia orbicola (strain AU 1054).